Consider the following 425-residue polypeptide: Serine hydroxymethyltransferase (425 aa).

(6S)-5,6,7,8-tetrahydrofolate contacts are provided by residues Leu128 and 132 to 134; that span reads GHL. Residue Lys237 is modified to N6-(pyridoxal phosphate)lysine.

This sequence belongs to the SHMT family. Homodimer. The cofactor is pyridoxal 5'-phosphate.

The protein localises to the cytoplasm. The catalysed reaction is (6R)-5,10-methylene-5,6,7,8-tetrahydrofolate + glycine + H2O = (6S)-5,6,7,8-tetrahydrofolate + L-serine. It participates in one-carbon metabolism; tetrahydrofolate interconversion. It functions in the pathway amino-acid biosynthesis; glycine biosynthesis; glycine from L-serine: step 1/1. Functionally, catalyzes the reversible interconversion of serine and glycine with tetrahydrofolate (THF) serving as the one-carbon carrier. This reaction serves as the major source of one-carbon groups required for the biosynthesis of purines, thymidylate, methionine, and other important biomolecules. Also exhibits THF-independent aldolase activity toward beta-hydroxyamino acids, producing glycine and aldehydes, via a retro-aldol mechanism. The chain is Serine hydroxymethyltransferase from Wolbachia pipientis subsp. Culex pipiens (strain wPip).